A 526-amino-acid polypeptide reads, in one-letter code: Alpha-ketoglutaric semialdehyde dehydrogenase (526 aa).

Residues 159–160, 185–188, and 240–241 contribute to the NADP(+) site; these read SN, KAHS, and GS. Glu264 acts as the Proton acceptor in catalysis. The Nucleophile role is filled by Cys301. An NADP(+)-binding site is contributed by Glu393.

It belongs to the aldehyde dehydrogenase family.

The enzyme catalyses 2,5-dioxopentanoate + NADP(+) + H2O = 2-oxoglutarate + NADPH + 2 H(+). It functions in the pathway carbohydrate acid metabolism; D-glucarate degradation. Its function is as follows. Catalyzes the NAD(P)(+)-dependent oxidation of alpha-ketoglutaric semialdehyde (alphaKGSA) to alpha-ketoglutarate in the D-glutarate degradation pathway. This chain is Alpha-ketoglutaric semialdehyde dehydrogenase, found in Acinetobacter baylyi (strain ATCC 33305 / BD413 / ADP1).